The sequence spans 287 residues: Uroplakin-3a (287 aa).

The first 18 residues, 1–18, serve as a signal peptide directing secretion; the sequence is MPPLWALLALGCLRFGSA. Over 19–207 the chain is Lumenal; sequence VNLQPQLASV…DTWPGRRSGG (189 aa). N-linked (GlcNAc...) asparagine glycosylation is found at Asn74, Asn139, and Asn170. The chain crosses the membrane as a helical span at residues 208 to 235; that stretch reads MIVITSILGSLPFFLLVGFAGAIALSLV. Over 236 to 287 the chain is Cytoplasmic; it reads DMGSSDGETTHDSQITQEAVPKSLGASESSYTSVNRGPPLDRAEVYSSKLQD. Residues 242-287 form a disordered region; it reads GETTHDSQITQEAVPKSLGASESSYTSVNRGPPLDRAEVYSSKLQD. Residues 261–270 show a composition bias toward polar residues; that stretch reads ASESSYTSVN.

The protein belongs to the uroplakin-3 family. Heterodimer with uroplakin-1B (UPK1B). As to expression, expressed in ureter.

It is found in the endoplasmic reticulum membrane. Component of the asymmetric unit membrane (AUM); a highly specialized biomembrane elaborated by terminally differentiated urothelial cells. May play an important role in AUM-cytoskeleton interaction in terminally differentiated urothelial cells. It also contributes to the formation of urothelial glycocalyx which may play an important role in preventing bacterial adherence. The protein is Uroplakin-3a (UPK3A) of Homo sapiens (Human).